Consider the following 169-residue polypeptide: Myosin regulatory light chain 11 (169 aa).

At A2 the chain carries N,N,N-trimethylalanine. 2 positions are modified to phosphoserine: S15 and S16. 2 positions are modified to phosphothreonine: T25 and T35. Positions 25–60 (TQIQEFKEAFTVIDQNRDGIIDKEDLRDTFAAMGRL) constitute an EF-hand 1 domain. Ca(2+)-binding residues include D38, N40, D42, and D49. S75 carries the post-translational modification Phosphoserine. EF-hand domains are found at residues 95-130 (DPED…QCDR) and 131-166 (FSQE…GDAK). Phosphothreonine is present on T101.

As to quaternary structure, myosin is a hexamer of 2 heavy chains and 4 light chains.

Its function is as follows. Myosin regulatory subunit that plays an essential role to maintain muscle integrity during early development. Plays a role in regulation of muscle contraction. This is Myosin regulatory light chain 11 (Myl11) from Mus musculus (Mouse).